Reading from the N-terminus, the 689-residue chain is Glycine--tRNA ligase beta subunit (689 aa).

The protein belongs to the class-II aminoacyl-tRNA synthetase family. As to quaternary structure, tetramer of two alpha and two beta subunits.

It is found in the cytoplasm. The catalysed reaction is tRNA(Gly) + glycine + ATP = glycyl-tRNA(Gly) + AMP + diphosphate. The protein is Glycine--tRNA ligase beta subunit of Actinobacillus pleuropneumoniae serotype 5b (strain L20).